The sequence spans 122 residues: Large ribosomal subunit protein uL14 (122 aa).

It belongs to the universal ribosomal protein uL14 family. In terms of assembly, part of the 50S ribosomal subunit. Forms a cluster with proteins L3 and L19. In the 70S ribosome, L14 and L19 interact and together make contacts with the 16S rRNA in bridges B5 and B8.

Its function is as follows. Binds to 23S rRNA. Forms part of two intersubunit bridges in the 70S ribosome. The polypeptide is Large ribosomal subunit protein uL14 (Borreliella afzelii (strain PKo) (Borrelia afzelii)).